The sequence spans 402 residues: Glutamate N-acetyltransferase (402 aa).

Substrate is bound by residues Thr-146, Lys-172, Thr-185, Glu-267, Asn-397, and Thr-402. The Nucleophile role is filled by Thr-185.

This sequence belongs to the ArgJ family. In terms of assembly, heterotetramer of two alpha and two beta chains.

It localises to the cytoplasm. The catalysed reaction is N(2)-acetyl-L-ornithine + L-glutamate = N-acetyl-L-glutamate + L-ornithine. Its pathway is amino-acid biosynthesis; L-arginine biosynthesis; L-ornithine and N-acetyl-L-glutamate from L-glutamate and N(2)-acetyl-L-ornithine (cyclic): step 1/1. Its activity is regulated as follows. Competitively inhibited by L-ornithine. Functionally, catalyzes the transfer of the acetyl group from N(2)-acetylornithine to glutamate, forming N-acetylglutamate and L-ornithine. The sequence is that of Glutamate N-acetyltransferase from Methanocaldococcus jannaschii (strain ATCC 43067 / DSM 2661 / JAL-1 / JCM 10045 / NBRC 100440) (Methanococcus jannaschii).